Reading from the N-terminus, the 358-residue chain is UDP-N-acetylglucosamine--N-acetylmuramyl-(pentapeptide) pyrophosphoryl-undecaprenol N-acetylglucosamine transferase (358 aa).

Residues 13–15 (TAG), R166, S196, and Q291 contribute to the UDP-N-acetyl-alpha-D-glucosamine site.

The protein belongs to the glycosyltransferase 28 family. MurG subfamily.

The protein localises to the cell membrane. The enzyme catalyses di-trans,octa-cis-undecaprenyl diphospho-N-acetyl-alpha-D-muramoyl-L-alanyl-D-glutamyl-meso-2,6-diaminopimeloyl-D-alanyl-D-alanine + UDP-N-acetyl-alpha-D-glucosamine = di-trans,octa-cis-undecaprenyl diphospho-[N-acetyl-alpha-D-glucosaminyl-(1-&gt;4)]-N-acetyl-alpha-D-muramoyl-L-alanyl-D-glutamyl-meso-2,6-diaminopimeloyl-D-alanyl-D-alanine + UDP + H(+). Its pathway is cell wall biogenesis; peptidoglycan biosynthesis. Cell wall formation. Catalyzes the transfer of a GlcNAc subunit on undecaprenyl-pyrophosphoryl-MurNAc-pentapeptide (lipid intermediate I) to form undecaprenyl-pyrophosphoryl-MurNAc-(pentapeptide)GlcNAc (lipid intermediate II). The chain is UDP-N-acetylglucosamine--N-acetylmuramyl-(pentapeptide) pyrophosphoryl-undecaprenol N-acetylglucosamine transferase from Clostridium botulinum (strain Alaska E43 / Type E3).